We begin with the raw amino-acid sequence, 173 residues long: Crossover junction endodeoxyribonuclease RuvC (173 aa).

Catalysis depends on residues D11, E71, and D143. Mg(2+) contacts are provided by D11, E71, and D143.

The protein belongs to the RuvC family. In terms of assembly, homodimer which binds Holliday junction (HJ) DNA. The HJ becomes 2-fold symmetrical on binding to RuvC with unstacked arms; it has a different conformation from HJ DNA in complex with RuvA. In the full resolvosome a probable DNA-RuvA(4)-RuvB(12)-RuvC(2) complex forms which resolves the HJ. It depends on Mg(2+) as a cofactor.

Its subcellular location is the cytoplasm. It catalyses the reaction Endonucleolytic cleavage at a junction such as a reciprocal single-stranded crossover between two homologous DNA duplexes (Holliday junction).. In terms of biological role, the RuvA-RuvB-RuvC complex processes Holliday junction (HJ) DNA during genetic recombination and DNA repair. Endonuclease that resolves HJ intermediates. Cleaves cruciform DNA by making single-stranded nicks across the HJ at symmetrical positions within the homologous arms, yielding a 5'-phosphate and a 3'-hydroxyl group; requires a central core of homology in the junction. The consensus cleavage sequence is 5'-(A/T)TT(C/G)-3'. Cleavage occurs on the 3'-side of the TT dinucleotide at the point of strand exchange. HJ branch migration catalyzed by RuvA-RuvB allows RuvC to scan DNA until it finds its consensus sequence, where it cleaves and resolves the cruciform DNA. The protein is Crossover junction endodeoxyribonuclease RuvC of Brucella abortus (strain 2308).